We begin with the raw amino-acid sequence, 449 residues long: Phosphoglucosamine mutase (449 aa).

Serine 101 serves as the catalytic Phosphoserine intermediate. Mg(2+)-binding residues include serine 101, aspartate 243, aspartate 245, and aspartate 247. Serine 101 carries the phosphoserine modification.

The protein belongs to the phosphohexose mutase family. Mg(2+) is required as a cofactor. Post-translationally, activated by phosphorylation.

The enzyme catalyses alpha-D-glucosamine 1-phosphate = D-glucosamine 6-phosphate. In terms of biological role, catalyzes the conversion of glucosamine-6-phosphate to glucosamine-1-phosphate. This chain is Phosphoglucosamine mutase, found in Syntrophus aciditrophicus (strain SB).